We begin with the raw amino-acid sequence, 388 residues long: Probable peptidoglycan glycosyltransferase FtsW (388 aa).

The Cytoplasmic portion of the chain corresponds to 1 to 19 (MMSPSTSAPHNQPIQPELD). A helical transmembrane segment spans residues 20–40 (VLLVSTVLLLLGLGLVMVYSA). Topologically, residues 41 to 55 (SIAIAEAKFGEGSSY) are periplasmic. The helical transmembrane segment at 56–76 (YFLARQASYILAGIAVGIGCF) threads the bilayer. Over 77–89 (RIPLRWWQAYSHY) the chain is Cytoplasmic. A helical membrane pass occupies residues 90–110 (LLGLGILLLLVVLIPGISHEI). Over 111 to 116 (NGSRRW) the chain is Periplasmic. The chain crosses the membrane as a helical span at residues 117–137 (IPLGITSFQPSELMKLIILIF). The Cytoplasmic portion of the chain corresponds to 138–151 (TADYVVRKAAFKDH). The helical transmembrane segment at 152-172 (FFKGFLPILALLTIVSLLLLM) threads the bilayer. Residues 173-175 (EPD) are Periplasmic-facing. Transmembrane regions (helical) follow at residues 176 to 196 (LGAT…NGMS) and 197 to 217 (LKMF…LIII). Residues 218–284 (EPYRMDRINA…DFMFAVLAEE (67 aa)) lie on the Periplasmic side of the membrane. The chain crosses the membrane as a helical span at residues 285–305 (LGFAGVVTVISLFFFLLVRIF). Residues 306-324 (KVGRTAARLGDQFGSLVAQ) lie on the Cytoplasmic side of the membrane. The helical transmembrane segment at 325–345 (GIGVWLGLQAFINMGVNMGLL) threads the bilayer. Residues 346 to 351 (PTKGLT) are Periplasmic-facing. Residues 352–372 (LPFMSYGGSSIVINSIAIAIL) traverse the membrane as a helical segment. Topologically, residues 373-388 (LRIDWENRLKRRGLNA) are cytoplasmic.

The protein belongs to the SEDS family. FtsW subfamily.

The protein resides in the cell inner membrane. The enzyme catalyses [GlcNAc-(1-&gt;4)-Mur2Ac(oyl-L-Ala-gamma-D-Glu-L-Lys-D-Ala-D-Ala)](n)-di-trans,octa-cis-undecaprenyl diphosphate + beta-D-GlcNAc-(1-&gt;4)-Mur2Ac(oyl-L-Ala-gamma-D-Glu-L-Lys-D-Ala-D-Ala)-di-trans,octa-cis-undecaprenyl diphosphate = [GlcNAc-(1-&gt;4)-Mur2Ac(oyl-L-Ala-gamma-D-Glu-L-Lys-D-Ala-D-Ala)](n+1)-di-trans,octa-cis-undecaprenyl diphosphate + di-trans,octa-cis-undecaprenyl diphosphate + H(+). It functions in the pathway cell wall biogenesis; peptidoglycan biosynthesis. Functionally, peptidoglycan polymerase that is essential for cell division. The protein is Probable peptidoglycan glycosyltransferase FtsW of Nitrosomonas europaea (strain ATCC 19718 / CIP 103999 / KCTC 2705 / NBRC 14298).